The primary structure comprises 412 residues: Cysteate synthase (412 aa).

Residue K105 is modified to N6-(pyridoxal phosphate)lysine. Residues N131 and T382 each coordinate pyridoxal 5'-phosphate.

It belongs to the threonine synthase family. Cysteate synthase subfamily. As to quaternary structure, homotrimer. It depends on pyridoxal 5'-phosphate as a cofactor.

The catalysed reaction is O-phospho-L-serine + sulfite + H(+) = L-cysteate + phosphate. The protein operates within cofactor biosynthesis; coenzyme M biosynthesis. Its function is as follows. Specifically catalyzes the beta-elimination of phosphate from L-phosphoserine and the beta-addition of sulfite to the dehydroalanine intermediate to produce L-cysteate. The sequence is that of Cysteate synthase from Methanocorpusculum labreanum (strain ATCC 43576 / DSM 4855 / Z).